Consider the following 234-residue polypeptide: Phosphoribosylaminoimidazole-succinocarboxamide synthase (234 aa).

Belongs to the SAICAR synthetase family.

It catalyses the reaction 5-amino-1-(5-phospho-D-ribosyl)imidazole-4-carboxylate + L-aspartate + ATP = (2S)-2-[5-amino-1-(5-phospho-beta-D-ribosyl)imidazole-4-carboxamido]succinate + ADP + phosphate + 2 H(+). It participates in purine metabolism; IMP biosynthesis via de novo pathway; 5-amino-1-(5-phospho-D-ribosyl)imidazole-4-carboxamide from 5-amino-1-(5-phospho-D-ribosyl)imidazole-4-carboxylate: step 1/2. The polypeptide is Phosphoribosylaminoimidazole-succinocarboxamide synthase (Pyrobaculum aerophilum (strain ATCC 51768 / DSM 7523 / JCM 9630 / CIP 104966 / NBRC 100827 / IM2)).